The primary structure comprises 971 residues: MSHPIQFVNANNSDKSHQLGGQYSIPQDLRENLQKEAARIGENEKDVLQEKMETRTVQNREDSYHKRRFDMKFEPDSDTQTVTSSENTQDAVVPRKRKSRWDVKGYEPPDESSTAVKENSDSALVNVEGIHDLMFFKPSDHKYFADVISKKPIDELNKDEKKERTLSMLLLKIKNGNTASRRTSMRILTDKAVTFGPEMIFNRLLPILLDRSLEDQERHLMIKTIDRVLYQLGDLTKPYVHKILVVAAPLLIDEDPMVRSTGQEIITNLSTVAGLKTILTVMRPDIENEDEYVRNVTSRAAAVVAKALGVNQLLPFINAACHSRKSWKARHTGIKIVQQIGILLGIGVLNHLTGLMSCIKDCLMDDHVPVRIVTAHTLSTLAENSYPYGIEVFNVVLEPLWKGIRSHRGKVLSSFLKAVGSMIPLMDPEYAGYYTTEAMRIIRREFDSPDDEMKKTILLVLQKCSAVESITPKFLREEIAPEFFQKFWVRRVALDRPLNKVVTYTTVTLAKKLGCSYTIDKLLTPLRDEAEPFRTMAVHAVTRTVNLLGTADLDERLETRLIDALLIAFQEQTNSDSIIFKGFGAVTVSLDIRMKPFLAPIVSTILNHLKHKTPLVRQHAADLCAILIPVIKNCHEFEMLNKLNIILYESLGEVYPEVLGSIINAMYCITSVMDLDKLQPPINQILPTLTPILRNKHRKVEVNTIKFVGLIGKLAPTYAPPKEWMRICFELLELLKSTNKEIRRSANATFGFIAEAIGPHDVLVALLNNLKVQERQLRVCTAVAIGIVAKVCGPYNVLPVIMNEYTTPETNVQNGVLKAMSFMFEYIGNMSKDYIYFITPLLEDALTDRDLVHRQTASNVITHLALNCSGTGHEDAFIHLMNLLIPNIFETSPHAIMRILEGLEALSQALGPGLFMNYIWAGLFHPAKNVRKAFWRVYNNMYVMYQDAMVPFYPVTPDNNEEYIEELDLVL.

Disordered stretches follow at residues 1 to 22 (MSHP…LGGQ) and 54 to 118 (TRTV…AVKE). A compositionally biased stretch (polar residues) spans 8 to 22 (VNANNSDKSHQLGGQ). A compositionally biased stretch (basic and acidic residues) spans 54–75 (TRTVQNREDSYHKRRFDMKFEP). The segment covering 78 to 90 (DTQTVTSSENTQD) has biased composition (polar residues). HEAT repeat units lie at residues 199 to 237 (MIFN…DLTK), 273 to 310 (AGLK…ALGV), 350 to 387 (NHLT…NSYP), 513 to 550 (LGCS…LLGT), 596 to 633 (PFLA…VIKN), 680 to 717 (PPIN…LAPT), 722 to 759 (KEWM…AIGP), 792 to 829 (CGPY…YIGN), and 832 to 870 (KDYI…NCSG).

The protein belongs to the SF3B1 family. In terms of assembly, belongs to the CWC complex (or CEF1-associated complex), a spliceosome sub-complex reminiscent of a late-stage spliceosome composed of the U2, U5 and U6 snRNAs and at least BUD13, BUD31, BRR2, CDC40, CEF1, CLF1, CUS1, CWC2, CWC15, CWC21, CWC22, CWC23, CWC24, CWC25, CWC27, ECM2, HSH155, IST3, ISY1, LEA1, MSL1, NTC20, PRP8, PRP9, PRP11, PRP19, PRP21, PRP22, PRP45, PRP46, SLU7, SMB1, SMD1, SMD2, SMD3, SMX2, SMX3, SNT309, SNU114, SPP2, SYF1, SYF2, RSE1 and YJU2. Interacts with RDS3.

The protein resides in the nucleus. In terms of biological role, contacts pre-mRNA on both sides of the branch site early in spliceosome assembly. This is U2 snRNP component HSH155 (HSH155) from Saccharomyces cerevisiae (strain ATCC 204508 / S288c) (Baker's yeast).